A 353-amino-acid polypeptide reads, in one-letter code: Probable dual-specificity RNA methyltransferase RlmN (353 aa).

The Proton acceptor role is filled by Glu-95. The Radical SAM core domain maps to 103 to 333; that stretch reads DGGRKTICIS…PILNRRSPGR (231 aa). Cys-110 and Cys-339 are disulfide-bonded. Positions 117, 121, and 124 each coordinate [4Fe-4S] cluster. Residues 164 to 165, Ser-196, 219 to 221, and Asn-296 contribute to the S-adenosyl-L-methionine site; these read GE and SLN. Catalysis depends on Cys-339, which acts as the S-methylcysteine intermediate.

This sequence belongs to the radical SAM superfamily. RlmN family. It depends on [4Fe-4S] cluster as a cofactor.

The protein localises to the cytoplasm. The enzyme catalyses adenosine(2503) in 23S rRNA + 2 reduced [2Fe-2S]-[ferredoxin] + 2 S-adenosyl-L-methionine = 2-methyladenosine(2503) in 23S rRNA + 5'-deoxyadenosine + L-methionine + 2 oxidized [2Fe-2S]-[ferredoxin] + S-adenosyl-L-homocysteine. The catalysed reaction is adenosine(37) in tRNA + 2 reduced [2Fe-2S]-[ferredoxin] + 2 S-adenosyl-L-methionine = 2-methyladenosine(37) in tRNA + 5'-deoxyadenosine + L-methionine + 2 oxidized [2Fe-2S]-[ferredoxin] + S-adenosyl-L-homocysteine. Specifically methylates position 2 of adenine 2503 in 23S rRNA and position 2 of adenine 37 in tRNAs. The chain is Probable dual-specificity RNA methyltransferase RlmN from Leptospira biflexa serovar Patoc (strain Patoc 1 / Ames).